Consider the following 319-residue polypeptide: uncharacterized protein (319 aa).

Residues 270-290 (AAALWWIPAWLAMIVEVAVLG) form a helical membrane-spanning segment.

The protein resides in the membrane. This is an uncharacterized protein from Mycobacterium tuberculosis (strain CDC 1551 / Oshkosh).